The sequence spans 122 residues: Large ribosomal subunit protein uL24 (122 aa).

This sequence belongs to the universal ribosomal protein uL24 family. In terms of assembly, part of the 50S ribosomal subunit.

One of two assembly initiator proteins, it binds directly to the 5'-end of the 23S rRNA, where it nucleates assembly of the 50S subunit. Its function is as follows. Located at the polypeptide exit tunnel on the outside of the subunit. This Methanosarcina mazei (strain ATCC BAA-159 / DSM 3647 / Goe1 / Go1 / JCM 11833 / OCM 88) (Methanosarcina frisia) protein is Large ribosomal subunit protein uL24.